Consider the following 148-residue polypeptide: Large ribosomal subunit protein uL15 (148 aa).

Residues 1–51 (MNLSNLKPAEGSTKTRKRIGRGAGSGLGGTSTRGHKGAKSRSGYSKKVGFE) are disordered. Gly residues predominate over residues 21 to 31 (RGAGSGLGGTS).

This sequence belongs to the universal ribosomal protein uL15 family. Part of the 50S ribosomal subunit.

Binds to the 23S rRNA. This Bacteroides thetaiotaomicron (strain ATCC 29148 / DSM 2079 / JCM 5827 / CCUG 10774 / NCTC 10582 / VPI-5482 / E50) protein is Large ribosomal subunit protein uL15.